A 243-amino-acid chain; its full sequence is Exosome complex component Rrp41 (243 aa).

This sequence belongs to the RNase PH family. Rrp41 subfamily. In terms of assembly, component of the archaeal exosome complex. Forms a hexameric ring-like arrangement composed of 3 Rrp41-Rrp42 heterodimers. The hexameric ring associates with a trimer of Rrp4 and/or Csl4 subunits.

It is found in the cytoplasm. Its function is as follows. Catalytic component of the exosome, which is a complex involved in RNA degradation. Has 3'-&gt;5' exoribonuclease activity. Can also synthesize heteromeric RNA-tails. This is Exosome complex component Rrp41 from Cenarchaeum symbiosum (strain A).